Consider the following 427-residue polypeptide: Adenylosuccinate synthetase (427 aa).

GTP is bound by residues 12 to 18 (GDEGKGK) and 40 to 42 (GHT). D13 serves as the catalytic Proton acceptor. D13 and G40 together coordinate Mg(2+). IMP-binding positions include 13–16 (DEGK), 38–41 (NAGH), T131, R145, Q226, T241, and R305. H41 acts as the Proton donor in catalysis. 301–307 (ATTGRKR) provides a ligand contact to substrate. Residues R307, 333 to 335 (KLD), and 415 to 417 (SVG) each bind GTP.

The protein belongs to the adenylosuccinate synthetase family. As to quaternary structure, homodimer. Requires Mg(2+) as cofactor.

It localises to the cytoplasm. It carries out the reaction IMP + L-aspartate + GTP = N(6)-(1,2-dicarboxyethyl)-AMP + GDP + phosphate + 2 H(+). Its pathway is purine metabolism; AMP biosynthesis via de novo pathway; AMP from IMP: step 1/2. Functionally, plays an important role in the de novo pathway of purine nucleotide biosynthesis. Catalyzes the first committed step in the biosynthesis of AMP from IMP. This Oleidesulfovibrio alaskensis (strain ATCC BAA-1058 / DSM 17464 / G20) (Desulfovibrio alaskensis) protein is Adenylosuccinate synthetase.